Reading from the N-terminus, the 635-residue chain is Factor of DNA methylation 2 (635 aa).

The stretch at 289–471 (LDEKKNLHQA…ESMNSVLMTK (183 aa)) forms a coiled coil. Basic and acidic residues predominate over residues 350–365 (ELERQKLDEDKRKSDA). The tract at residues 350–376 (ELERQKLDEDKRKSDAMNKSLQLASRE) is disordered.

Forms a complex with IDN2 and FMD1/INDL1. As to expression, highly expressed in flowers and at lower levels in roots, leaves and stems.

In terms of biological role, forms a complex with IDN2 and FDM1/IDNL1 that is required for RNA-directed DNA methylation (RdDM) and that functions at a downstream step of the RdDM pathway. This Arabidopsis thaliana (Mouse-ear cress) protein is Factor of DNA methylation 2.